We begin with the raw amino-acid sequence, 535 residues long: Pentatricopeptide repeat-containing protein At5g16420, mitochondrial (535 aa).

A mitochondrion-targeting transit peptide spans 1 to 28 (MFLSRVNPTRFPPFVASRRLFSASASAA). PPR repeat units follow at residues 82-112 (NYDT…LRNS), 119-153 (GENL…GVKR), 154-189 (SVRS…GITP), 190-224 (NIFT…GLVP), 225-259 (NLVT…GWYP), 260-294 (DATT…EIEP), 295-329 (NEVT…SFMP), 330-364 (DSSL…NCMP), 365-395 (DNAL…FEKG), 399-433 (SLLT…KCKP), 434-468 (NAFT…GCFP), and 469-503 (NKTT…GKVD).

This sequence belongs to the PPR family. P subfamily.

The protein localises to the mitochondrion. The polypeptide is Pentatricopeptide repeat-containing protein At5g16420, mitochondrial (Arabidopsis thaliana (Mouse-ear cress)).